The sequence spans 151 residues: Protein NrdI (151 aa).

It belongs to the NrdI family.

Probably involved in ribonucleotide reductase function. This is Protein NrdI from Mycoplasmopsis pulmonis (strain UAB CTIP) (Mycoplasma pulmonis).